Reading from the N-terminus, the 563-residue chain is Eukaryotic translation initiation factor 3 subunit D-1 (563 aa).

The tract at residues 98–167 is disordered; it reads VQKPPHQRGR…GPPPKMRESS (70 aa). Residues 100-121 are compositionally biased toward basic residues; that stretch reads KPPHQRGRFRNMRNSRSGRGRN. Position 128 is a phosphothreonine (Thr128). An RNA gate region spans residues 291–305; sequence EFDLLTVNETSVEPP.

Belongs to the eIF-3 subunit D family. In terms of assembly, component of the eukaryotic translation initiation factor 3 (eIF-3) complex. The eIF-3 complex interacts with pix.

The protein resides in the cytoplasm. MRNA cap-binding component of the eukaryotic translation initiation factor 3 (eIF-3) complex, which is involved in protein synthesis of a specialized repertoire of mRNAs and, together with other initiation factors, stimulates binding of mRNA and methionyl-tRNAi to the 40S ribosome. The eIF-3 complex specifically targets and initiates translation of a subset of mRNAs involved in cell proliferation. In the eIF-3 complex, eif3d specifically recognizes and binds the 7-methylguanosine cap of a subset of mRNAs. The polypeptide is Eukaryotic translation initiation factor 3 subunit D-1 (Drosophila virilis (Fruit fly)).